A 1744-amino-acid chain; its full sequence is Transcription initiation factor TFIID subunit 1 (1744 aa).

6 disordered regions span residues 1 to 65 (MNNT…EKNE), 248 to 275 (VSIR…APNS), 429 to 488 (PEDR…DNDP), 1001 to 1024 (QNQT…DSDN), 1071 to 1098 (TTNQ…SQFG), and 1186 to 1213 (MKKN…PPNP). A compositionally biased stretch (polar residues) spans 43-52 (ACSSASNGGS). The segment covering 55-64 (VKMEPKVEKN) has biased composition (basic and acidic residues). A compositionally biased stretch (basic and acidic residues) spans 429 to 439 (PEDRRHDEGPD). The span at 440–449 (HHHHHHHHRK) shows a compositional bias: basic residues. Residues 477–488 (ESTMAQFTDNDP) are compositionally biased toward polar residues. Acidic residues predominate over residues 1012-1024 (STDDDSTDADSDN). Coiled coils occupy residues 1019–1080 (DADS…KGEK), 1161–1204 (YAQM…TEKK), and 1282–1314 (NFAE…RQMA). Composition is skewed to basic and acidic residues over residues 1076–1093 (EKGE…EKKS) and 1186–1205 (MKKN…EKKV). Positions 1319-1344 (YGGGASSSGGAGGGGSGIGGSTGGGI) are enriched in gly residues. Positions 1319–1391 (YGGGASSSGG…SKRRSSMMPE (73 aa)) are disordered. The span at 1354–1363 (SQISGTSSFL) shows a compositional bias: polar residues. A compositionally biased stretch (low complexity) spans 1372–1381 (GGNRNSSVSG). Positions 1379 to 1386 (VSGSKRRS) match the Nuclear localization signal motif. 2 consecutive Bromo domains span residues 1404–1512 (RARA…MIER) and 1537–1634 (YLLG…VKDQ). Positions 1666-1694 (DHMDEMEDHPTEEEEEDDDDEIMDDDMDI) are enriched in acidic residues. Disordered regions lie at residues 1666–1702 (DHMD…YSYD) and 1714–1744 (NDLA…LDSF).

The protein belongs to the TAF1 family. Component of the TFIID basal transcription factor complex, composed of TATA-box-binding protein tbp-1, and a number of TBP-associated factors (TAFs).

Its subcellular location is the nucleus. The TFIID basal transcription factor complex plays a major role in the initiation of RNA polymerase II (Pol II)-dependent transcription. TFIID recognizes and binds promoters via its subunit tbp-1, a TATA-box-binding protein, and promotes assembly of the pre-initiation complex (PIC). The TFIID complex consists of tbp-1 and TBP-associated factors (TAFs), including taf-1. May regulate RNA polymerase II activity and thereby may control transcription initiation by RNA polymerase II. Required for early embryonic development. Essential for embryonic transcription of several genes. The protein is Transcription initiation factor TFIID subunit 1 of Caenorhabditis elegans.